Reading from the N-terminus, the 480-residue chain is ATP synthase subunit beta (480 aa).

ATP is bound at residue 158 to 165; the sequence is GGAGVGKT.

The protein belongs to the ATPase alpha/beta chains family. F-type ATPases have 2 components, CF(1) - the catalytic core - and CF(0) - the membrane proton channel. CF(1) has five subunits: alpha(3), beta(3), gamma(1), delta(1), epsilon(1). CF(0) has three main subunits: a(1), b(2) and c(9-12). The alpha and beta chains form an alternating ring which encloses part of the gamma chain. CF(1) is attached to CF(0) by a central stalk formed by the gamma and epsilon chains, while a peripheral stalk is formed by the delta and b chains.

The protein localises to the cell inner membrane. It catalyses the reaction ATP + H2O + 4 H(+)(in) = ADP + phosphate + 5 H(+)(out). Its function is as follows. Produces ATP from ADP in the presence of a proton gradient across the membrane. The catalytic sites are hosted primarily by the beta subunits. This Acidobacterium capsulatum (strain ATCC 51196 / DSM 11244 / BCRC 80197 / JCM 7670 / NBRC 15755 / NCIMB 13165 / 161) protein is ATP synthase subunit beta.